The chain runs to 82 residues: ATP synthase subunit c, chloroplastic (82 aa).

Helical transmembrane passes span 4–24 (IISA…AIGP) and 57–77 (LAFM…LLFA).

This sequence belongs to the ATPase C chain family. As to quaternary structure, F-type ATPases have 2 components, F(1) - the catalytic core - and F(0) - the membrane proton channel. F(1) has five subunits: alpha(3), beta(3), gamma(1), delta(1), epsilon(1). F(0) has four main subunits: a(1), b(1), b'(1) and c(10-14). The alpha and beta chains form an alternating ring which encloses part of the gamma chain. F(1) is attached to F(0) by a central stalk formed by the gamma and epsilon chains, while a peripheral stalk is formed by the delta, b and b' chains.

The protein localises to the plastid. It localises to the chloroplast thylakoid membrane. In terms of biological role, f(1)F(0) ATP synthase produces ATP from ADP in the presence of a proton or sodium gradient. F-type ATPases consist of two structural domains, F(1) containing the extramembraneous catalytic core and F(0) containing the membrane proton channel, linked together by a central stalk and a peripheral stalk. During catalysis, ATP synthesis in the catalytic domain of F(1) is coupled via a rotary mechanism of the central stalk subunits to proton translocation. Its function is as follows. Key component of the F(0) channel; it plays a direct role in translocation across the membrane. A homomeric c-ring of between 10-14 subunits forms the central stalk rotor element with the F(1) delta and epsilon subunits. This is ATP synthase subunit c, chloroplastic from Thalassiosira pseudonana (Marine diatom).